Consider the following 193-residue polypeptide: Copper-binding lipoprotein NosL (193 aa).

Residues 1-19 form the signal peptide; sequence MRTRLRFVLVAAALALLSA. Cysteine 20 carries N-palmitoyl cysteine lipidation. Residue cysteine 20 is the site of S-diacylglycerol cysteine attachment.

The protein belongs to the NosL family. As to quaternary structure, monomer. Apo-NosL can form homodimers.

The protein localises to the cell membrane. Functionally, may act as a metallochaperone involved in nitrous oxide reductase assembly. Specifically binds Cu(+). The protein is Copper-binding lipoprotein NosL of Achromobacter cycloclastes.